A 394-amino-acid polypeptide reads, in one-letter code: Bone morphogenetic protein 15 (394 aa).

The signal sequence occupies residues 1-18; the sequence is MVLLSILRILLLWGLVLF. Residues 19–269 constitute a propeptide that is removed on maturation; it reads MEHRVQMTQV…DPSLLLRRAR (251 aa). Residues asparagine 87 and asparagine 238 are each glycosylated (N-linked (GlcNAc...) asparagine). Intrachain disulfides connect cysteine 293–cysteine 359, cysteine 322–cysteine 391, and cysteine 326–cysteine 393. Asparagine 375 carries N-linked (GlcNAc...) asparagine glycosylation.

Belongs to the TGF-beta family. In terms of assembly, homodimer or heterodimer (Potential). But, in contrast to other members of this family, cannot be disulfide-linked.

It is found in the secreted. May be involved in follicular development. Seems to be an oocyte-specific growth/differentiation factor that stimulates folliculogenesis and granulosa cell (GC) growth. In Bos taurus (Bovine), this protein is Bone morphogenetic protein 15 (BMP15).